Consider the following 79-residue polypeptide: Putative membrane protein insertion efficiency factor (79 aa).

The protein belongs to the UPF0161 family.

Its subcellular location is the cell inner membrane. In terms of biological role, could be involved in insertion of integral membrane proteins into the membrane. This Prochlorococcus marinus (strain NATL2A) protein is Putative membrane protein insertion efficiency factor.